The sequence spans 335 residues: Fructose-1,6-bisphosphatase class 1 (335 aa).

4 residues coordinate Mg(2+): Glu-90, Asp-112, Leu-114, and Asp-115. Substrate-binding positions include 115 to 118 (DGSS), Asn-210, and Lys-276. Glu-282 is a binding site for Mg(2+).

The protein belongs to the FBPase class 1 family. Homotetramer. Mg(2+) is required as a cofactor.

Its subcellular location is the cytoplasm. The catalysed reaction is beta-D-fructose 1,6-bisphosphate + H2O = beta-D-fructose 6-phosphate + phosphate. It participates in carbohydrate biosynthesis; gluconeogenesis. This is Fructose-1,6-bisphosphatase class 1 from Ectopseudomonas mendocina (strain ymp) (Pseudomonas mendocina).